We begin with the raw amino-acid sequence, 123 residues long: MARTLALRASAGLVAGMAMAAITLAPGARAETGEQFPGDGVFLVGTDIAPGTYRTEGPSNPLILVFGRVSELSTCSWSTHSAPEVSNENIVDTNTSMGPMSVVIPPTVAAFQTHNCKLWMRIS.

Positions Met1–Ala20 are cleaved as a signal peptide.

This is an uncharacterized protein from Mycobacterium bovis (strain ATCC BAA-935 / AF2122/97).